The following is a 152-amino-acid chain: Toxin Res (152 aa).

The protein belongs to the MbcT/ParT/Res family. Homodimer. Forms a complex with cognate antitoxin Xre.

In terms of biological role, toxic component of a type II toxin-antitoxin (TA) system. Expression in E.coli inhibits cell growth; bacteriostasis is neutralized by expression of cognate antitoxin Xre. Probably depletes intracellular NAD(+). In Yersinia enterocolitica serotype O:8 / biotype 1B (strain NCTC 13174 / 8081), this protein is Toxin Res.